The chain runs to 481 residues: MSQQTTPNAPGWAPDSWRSKPIKQCPEYPDKAALEKATNELKTLPPIVLPNEIIRLREHLRDVAQGKAFLLQGGDCAELFSYCQQDVIESKIKLLLQMSLVLLWGADKPVVRIGRMAGQYAKPRSSPVETINGKEVPSFRGDILNGFHPDERELDPNRLVRAYQYSSATLNYIRGAIGSGIADLHGPLDWGLGHVRDPALKSKYQETVDRIQEMLRFMHTIGADQNEKLSTVELFTSHEGLLLEYEEPLTRLLNHPSVRSYPPDSTTPPKKEYYNTSAHFLWIGDRTRQIDHAHVEYFRGIANPIGVKIGPSTPTSDLLPMLRTLNPNREPGKVTLITRYGADKVASLLPAHIRTVESSEYARTVVWQCDPMHGNTQSVSGGIKTRKFSDIFSELQQTLRIHKEEKSYLGGMHLELTGDAVTECLGGGAGLDEDDLSTNYTSFCDPRLNEKQALELAFLVADHYRQERKEKEAERRKSSVV.

A disordered region spans residues 1-22 (MSQQTTPNAPGWAPDSWRSKPI).

It belongs to the class-II DAHP synthase family. In terms of assembly, homodimer. Post-translationally, the N-terminus is blocked.

It carries out the reaction D-erythrose 4-phosphate + phosphoenolpyruvate + H2O = 7-phospho-2-dehydro-3-deoxy-D-arabino-heptonate + phosphate. The protein operates within metabolic intermediate biosynthesis; chorismate biosynthesis; chorismate from D-erythrose 4-phosphate and phosphoenolpyruvate: step 1/7. The protein is Phospho-2-dehydro-3-deoxyheptonate aldolase (aro-8) of Neurospora crassa (strain ATCC 24698 / 74-OR23-1A / CBS 708.71 / DSM 1257 / FGSC 987).